A 436-amino-acid polypeptide reads, in one-letter code: KICSTOR complex protein kaptin (436 aa).

Residue M1 is modified to N-acetylmethionine.

Part of the KICSTOR complex composed of KPTN, ITFG2, KICS2 and SZT2. SZT2 probably serves as a link between the other three proteins in the KICSTOR complex and mediates the direct interaction with the GATOR1 complex. May associate with F-actin filaments.

Its subcellular location is the lysosome membrane. It is found in the cell projection. The protein localises to the lamellipodium. The protein resides in the stereocilium. Functionally, as part of the KICSTOR complex functions in the amino acid-sensing branch of the TORC1 signaling pathway. Recruits, in an amino acid-independent manner, the GATOR1 complex to the lysosomal membranes and allows its interaction with GATOR2 and the RAG GTPases. Functions upstream of the RAG GTPases and is required to negatively regulate mTORC1 signaling in absence of amino acids. In absence of the KICSTOR complex mTORC1 is constitutively localized to the lysosome and activated. The KICSTOR complex is also probably involved in the regulation of mTORC1 by glucose. This is KICSTOR complex protein kaptin from Homo sapiens (Human).